The following is a 460-amino-acid chain: Ribulose bisphosphate carboxylase (460 aa).

N112 lines the substrate pocket. K167 functions as the Proton acceptor in the catalytic mechanism. K169 lines the substrate pocket. Residues K192, D194, and E195 each coordinate Mg(2+). K192 is modified (N6-carboxylysine). The active-site Proton acceptor is the H288. 3 residues coordinate substrate: R289, H322, and S369.

It belongs to the RuBisCO large chain family. Type II subfamily. Homodimer. It depends on Mg(2+) as a cofactor.

It carries out the reaction 2 (2R)-3-phosphoglycerate + 2 H(+) = D-ribulose 1,5-bisphosphate + CO2 + H2O. The enzyme catalyses D-ribulose 1,5-bisphosphate + O2 = 2-phosphoglycolate + (2R)-3-phosphoglycerate + 2 H(+). In terms of biological role, ruBisCO catalyzes two reactions: the carboxylation of D-ribulose 1,5-bisphosphate, the primary event in carbon dioxide fixation, as well as the oxidative fragmentation of the pentose substrate. Both reactions occur simultaneously and in competition at the same active site. This chain is Ribulose bisphosphate carboxylase, found in Rhodopseudomonas palustris (strain BisA53).